The chain runs to 1332 residues: DEMETER-like protein 2 (1332 aa).

The segment covering 1–23 (MEVEGEVREKEARVKGRQPETEV) has biased composition (basic and acidic residues). Disordered regions lie at residues 1–29 (MEVE…GLPQ), 137–242 (VSTS…TSEE), and 280–317 (VEGS…KKTD). The span at 137–153 (VSTSTQRTEPESPQITL) shows a compositional bias: polar residues. Residues 223-236 (SKAGIKKSSIAATA) show a composition bias toward low complexity. Residues 301-312 (PKGRRGQRRSNG) show a composition bias toward basic residues. The DEMETER stretch occupies residues 497–595 (KVQLDPETSR…AYMDLAAEFP (99 aa)). Polar residues predominate over residues 739-753 (HQQDPESTIQTQDQQ). A disordered region spans residues 739–810 (HQQDPESTIQ…GGRKRERTER (72 aa)). Over residues 763 to 777 (KNRKKPTTSKPKKKS) the composition is skewed to basic residues. Residues 787–810 (KSVDWDSLRKEAESGGRKRERTER) show a composition bias toward basic and acidic residues. [4Fe-4S] cluster is bound by residues Cys-970, Cys-977, Cys-980, and Cys-986.

It belongs to the DNA glycosylase family. DEMETER subfamily. The cofactor is [4Fe-4S] cluster.

The protein localises to the nucleus. Its function is as follows. Potential transcriptional activator that may act by nicking the target promoter. Catalyzes the release of 5-methylcytosine (5-meC) from DNA by a glycosylase/lyase mechanism. The sequence is that of DEMETER-like protein 2 (DML2) from Arabidopsis thaliana (Mouse-ear cress).